The chain runs to 515 residues: Iroquois-class homeodomain protein IRX-4 (515 aa).

Residues 144-205 (GTRRKNATRE…NARRRLKKEN (62 aa)) constitute a DNA-binding region (homeobox; TALE-type). 3 disordered regions span residues 205–258 (NKMT…ELEL), 278–307 (TPFQSLDSGPERIPASSDGPGTGKEASTTL), and 398–425 (GPTGVSATTPASSPAVTAPSGALDRHQD). Residues 214-223 (KCADEKRPYG) show a composition bias toward basic and acidic residues. The span at 224–236 (EGEEEEAGEEESR) shows a compositional bias: acidic residues. The segment covering 237–257 (EEPLKSAKSEGHAGKDDKELE) has biased composition (basic and acidic residues). Over residues 399-419 (PTGVSATTPASSPAVTAPSGA) the composition is skewed to low complexity.

This sequence belongs to the TALE/IRO homeobox family. In terms of assembly, interacts with the vitamin D receptor VDR but doesn't affect its transactivation activity. As to expression, expressed in the developing central nervous system, skin, and vibrissae, but predominantly expressed in the cardiac ventricles of the developing heart. Not expressed in the developing metanephric kidney or adult kidney.

It is found in the nucleus. Functionally, likely to be an important mediator of ventricular differentiation during cardiac development. This Mus musculus (Mouse) protein is Iroquois-class homeodomain protein IRX-4 (Irx4).